The chain runs to 267 residues: UPF0173 metal-dependent hydrolase THEYE_A0282 (267 aa).

The protein belongs to the UPF0173 family.

This chain is UPF0173 metal-dependent hydrolase THEYE_A0282, found in Thermodesulfovibrio yellowstonii (strain ATCC 51303 / DSM 11347 / YP87).